We begin with the raw amino-acid sequence, 370 residues long: Putative glutamate--cysteine ligase 2 (370 aa).

The protein belongs to the glutamate--cysteine ligase type 2 family. YbdK subfamily.

It carries out the reaction L-cysteine + L-glutamate + ATP = gamma-L-glutamyl-L-cysteine + ADP + phosphate + H(+). Its function is as follows. ATP-dependent carboxylate-amine ligase which exhibits weak glutamate--cysteine ligase activity. The protein is Putative glutamate--cysteine ligase 2 of Herminiimonas arsenicoxydans.